The following is a 257-amino-acid chain: MSVPLILTLLAGAATFIGAILGVIGQKPSNRVLAFSLGFAAGIMLLISLMEMLPAALRTDGMSPVMGYGMFVVGLLGYFALDKMLPHAHPQDLMQKNAKPTRGNIKRTAILLTLGISLHNFPEGVATYVTASNNLELGFGIALAVALHNIPEGLAVAGPVYAATGSKRTAILWAGISGLAEILGGVLTWLILGSMISPVVMAAIMAAVAGIMVALSVDELMPLAKEIDPNNNPSYGVLCGMSVMGLSLVLLQTAGFG.

Transmembrane regions (helical) follow at residues 5-25 (LILT…GVIG), 32-52 (VLAF…LMEM), 61-81 (GMSP…YFAL), 109-129 (AILL…ATYV), 137-157 (LGFG…LAVA), 171-191 (ILWA…TWLI), 195-215 (MISP…MVAL), and 236-256 (GVLC…TAGF). Fe(2+) contacts are provided by Asn-120 and Glu-123. Zn(2+)-binding residues include Glu-123 and His-148. Fe(2+)-binding residues include Asn-149, Glu-152, and Glu-181. Glu-152 is a Zn(2+) binding site.

It belongs to the ZIP transporter (TC 2.A.5) family. ZupT subfamily.

The protein resides in the cell inner membrane. It catalyses the reaction Zn(2+)(in) = Zn(2+)(out). In terms of biological role, mediates zinc uptake. May also transport other divalent cations. The sequence is that of Zinc transporter ZupT from Enterobacter sp. (strain 638).